We begin with the raw amino-acid sequence, 820 residues long: Scavenger receptor class F member 1 (820 aa).

A signal peptide spans 1–23 (MLAAMGLELVFSLLLLWTQGTQG). Residues 24–422 (STLDPAGQHV…TCQLGRHGKN (399 aa)) are Extracellular-facing. EGF-like domains lie at 56 to 90 (TIPI…AQCS), 98 to 133 (WGHD…RLCE), 163 to 193 (RRPC…RRCS), and 217 to 251 (WGPE…IRCE). Intrachain disulfides connect cysteine 60–cysteine 72, cysteine 66–cysteine 78, cysteine 80–cysteine 89, cysteine 102–cysteine 114, cysteine 108–cysteine 121, cysteine 123–cysteine 132, cysteine 166–cysteine 174, cysteine 168–cysteine 181, cysteine 183–cysteine 192, cysteine 221–cysteine 232, cysteine 225–cysteine 239, and cysteine 241–cysteine 250. Asparagine 291 is a glycosylation site (N-linked (GlcNAc...) asparagine). 2 consecutive EGF-like domains span residues 304 to 341 (FGER…HRCE) and 353 to 384 (CSST…TSCN). Residues 423–443 (ALIVGILVPLLLLLMGIVCCA) form a helical membrane-spanning segment. At 444–820 (YCCSGTRLDP…VVPMSVPPQH (377 aa)) the chain is on the cytoplasmic side. Disordered regions lie at residues 549–685 (PMAQ…IQES) and 715–820 (NYQK…PPQH). Phosphoserine is present on residues serine 590 and serine 607. Residues 631–648 (QEAEESTGPEQVNTEEDA) are compositionally biased toward acidic residues. The segment covering 650–662 (TATSSGDPATSHG) has biased composition (polar residues).

Heterophilic interaction with SREC2 via its extracellular domain. The heterophilic interaction is suppressed by the presence of ligand such as Ac-LDL. Interacts with AVIL; the interaction occurs in embryonic dorsal root ganglions at 18 dpc and induces neurite-like outgrowth. Expressed weakly in brain, spinal cord and dorsal root ganglions.

It localises to the membrane. Mediates the binding and degradation of acetylated low density lipoprotein (Ac-LDL). Mediates heterophilic interactions, suggesting a function as adhesion protein. Plays a role in the regulation of neurite-like outgrowth. This Mus musculus (Mouse) protein is Scavenger receptor class F member 1 (Scarf1).